A 382-amino-acid chain; its full sequence is Pyrimidine monooxygenase RutA (382 aa).

Residues 68 to 69 (IK), asparagine 134, glutamate 143, 159 to 160 (RY), and serine 209 each bind FMN.

It belongs to the NtaA/SnaA/DszA monooxygenase family. RutA subfamily.

The catalysed reaction is uracil + FMNH2 + NADH + O2 = (Z)-3-ureidoacrylate + FMN + NAD(+) + H2O + H(+). It catalyses the reaction thymine + FMNH2 + NADH + O2 = (Z)-2-methylureidoacrylate + FMN + NAD(+) + H2O + H(+). Functionally, catalyzes the pyrimidine ring opening between N-3 and C-4 by an unusual flavin hydroperoxide-catalyzed mechanism, adding oxygen atoms in the process to yield ureidoacrylate peracid, that immediately reacts with FMN forming ureidoacrylate and FMN-N(5)-oxide. The FMN-N(5)-oxide reacts spontaneously with NADH to produce FMN. Requires the flavin reductase RutF to regenerate FMN in vivo. The sequence is that of Pyrimidine monooxygenase RutA from Escherichia coli O150:H5 (strain SE15).